A 434-amino-acid chain; its full sequence is Enolase (434 aa).

Glutamine 167 provides a ligand contact to (2R)-2-phosphoglycerate. The active-site Proton donor is the glutamate 209. Residues aspartate 246, glutamate 291, and aspartate 318 each contribute to the Mg(2+) site. (2R)-2-phosphoglycerate is bound by residues lysine 343, arginine 372, serine 373, and lysine 394. Lysine 343 serves as the catalytic Proton acceptor.

This sequence belongs to the enolase family. Component of the RNA degradosome, a multiprotein complex involved in RNA processing and mRNA degradation. Mg(2+) serves as cofactor.

The protein localises to the cytoplasm. The protein resides in the secreted. It localises to the cell surface. The enzyme catalyses (2R)-2-phosphoglycerate = phosphoenolpyruvate + H2O. The protein operates within carbohydrate degradation; glycolysis; pyruvate from D-glyceraldehyde 3-phosphate: step 4/5. In terms of biological role, catalyzes the reversible conversion of 2-phosphoglycerate (2-PG) into phosphoenolpyruvate (PEP). It is essential for the degradation of carbohydrates via glycolysis. The polypeptide is Enolase (Buchnera aphidicola subsp. Schizaphis graminum (strain Sg)).